Reading from the N-terminus, the 804-residue chain is G-type lectin S-receptor-like serine/threonine-protein kinase At1g61500 (804 aa).

A signal peptide spans 1–24 (MMTRFACLHLFTMFLFTLLSGSSS). One can recognise a Bulb-type lectin domain in the interval 25 to 145 (AVITTESPLS…VSERALWQSF (121 aa)). The Extracellular segment spans residues 25 to 427 (AVITTESPLS…ELDGNKRKKT (403 aa)). 3 N-linked (GlcNAc...) asparagine glycosylation sites follow: Asn-54, Asn-135, and Asn-237. The region spanning 279–315 (PKKLCDFYGACGPFGLCVMSPSPMCKCFRGFVPKSVE) is the EGF-like; atypical domain. 2 cysteine pairs are disulfide-bonded: Cys-283–Cys-295 and Cys-289–Cys-303. Asn-321, Asn-337, and Asn-376 each carry an N-linked (GlcNAc...) asparagine glycan. One can recognise a PAN domain in the interval 334-416 (CLGNSTGEDA…GELLSIRLAR (83 aa)). 2 cysteine pairs are disulfide-bonded: Cys-369/Cys-390 and Cys-373/Cys-379. Residues 428–448 (IVASIVSLTLFMILGFTAFGV) form a helical membrane-spanning segment. Over 449-804 (WRCRVEHIAH…GMTQSVILGR (356 aa)) the chain is Cytoplasmic. Positions 491–776 (FSLSNKLGQG…DLPSPKQPTF (286 aa)) constitute a Protein kinase domain. ATP-binding positions include 497–505 (LGQGGFGSV) and Lys-519. Phosphoserine occurs at positions 525 and 540. The segment at 580 to 597 (RKRLEIDWPKRFDIIQGI) is caM-binding. Residue Asp-616 is the Proton acceptor of the active site. Residues Ser-620 and Ser-633 each carry the phosphoserine modification. Thr-650 is modified (phosphothreonine). Ser-693 and Ser-787 each carry phosphoserine.

Belongs to the protein kinase superfamily. Ser/Thr protein kinase family.

It is found in the cell membrane. It carries out the reaction L-seryl-[protein] + ATP = O-phospho-L-seryl-[protein] + ADP + H(+). The catalysed reaction is L-threonyl-[protein] + ATP = O-phospho-L-threonyl-[protein] + ADP + H(+). The sequence is that of G-type lectin S-receptor-like serine/threonine-protein kinase At1g61500 from Arabidopsis thaliana (Mouse-ear cress).